The primary structure comprises 152 residues: Ribosomal RNA large subunit methyltransferase H (152 aa).

S-adenosyl-L-methionine is bound by residues Leu-68, Gly-100, and 119 to 124 (FGPMTW).

The protein belongs to the RNA methyltransferase RlmH family. In terms of assembly, homodimer.

The protein resides in the cytoplasm. The catalysed reaction is pseudouridine(1915) in 23S rRNA + S-adenosyl-L-methionine = N(3)-methylpseudouridine(1915) in 23S rRNA + S-adenosyl-L-homocysteine + H(+). Functionally, specifically methylates the pseudouridine at position 1915 (m3Psi1915) in 23S rRNA. This is Ribosomal RNA large subunit methyltransferase H from Rhodospirillum centenum (strain ATCC 51521 / SW).